The sequence spans 145 residues: Angiogenin-3 (145 aa).

The signal sequence occupies residues 1–24 (MVMSPGSLLLVFLLSLDVIPPTLA). Position 25 is a pyrrolidone carboxylic acid (Gln25). His37 functions as the Proton acceptor in the catalytic mechanism. Disulfide bonds link Cys50-Cys104, Cys63-Cys115, and Cys81-Cys130. The Nucleolar localization signal signature appears at 55 to 59 (KKRKL). Residues Glu65 and His106 each coordinate Zn(2+). The active-site Proton donor is the His137.

The protein belongs to the pancreatic ribonuclease family.

The protein localises to the cytoplasmic vesicle. It localises to the secretory vesicle lumen. It is found in the secreted. The protein resides in the nucleus. Its subcellular location is the nucleolus. With respect to regulation, divalent metal ions, such as Cu2+ and Zn2+, may inhibit the ribonucleolytic activity. Has low ribonuclease activity (in vitro). In Mus musculus (Mouse), this protein is Angiogenin-3 (Ang3).